The following is a 228-amino-acid chain: 5'-methylthioadenosine/S-adenosylhomocysteine nucleosidase (228 aa).

E11 acts as the Proton acceptor in catalysis. Residues G77, I151, and 172–173 (ME) contribute to the substrate site. Catalysis depends on D196, which acts as the Proton donor.

It belongs to the PNP/UDP phosphorylase family. MtnN subfamily.

The enzyme catalyses S-adenosyl-L-homocysteine + H2O = S-(5-deoxy-D-ribos-5-yl)-L-homocysteine + adenine. It carries out the reaction S-methyl-5'-thioadenosine + H2O = 5-(methylsulfanyl)-D-ribose + adenine. The catalysed reaction is 5'-deoxyadenosine + H2O = 5-deoxy-D-ribose + adenine. The protein operates within amino-acid biosynthesis; L-methionine biosynthesis via salvage pathway; S-methyl-5-thio-alpha-D-ribose 1-phosphate from S-methyl-5'-thioadenosine (hydrolase route): step 1/2. Its function is as follows. Catalyzes the irreversible cleavage of the glycosidic bond in both 5'-methylthioadenosine (MTA) and S-adenosylhomocysteine (SAH/AdoHcy) to adenine and the corresponding thioribose, 5'-methylthioribose and S-ribosylhomocysteine, respectively. Also cleaves 5'-deoxyadenosine, a toxic by-product of radical S-adenosylmethionine (SAM) enzymes, into 5-deoxyribose and adenine. The polypeptide is 5'-methylthioadenosine/S-adenosylhomocysteine nucleosidase (Staphylococcus aureus (strain bovine RF122 / ET3-1)).